Here is a 779-residue protein sequence, read N- to C-terminus: Beta-galactosidase 15 (779 aa).

The N-terminal stretch at 1 to 19 (MVSLSFILCCVLVSSCAYA) is a signal peptide. Asn-148 is a glycosylation site (N-linked (GlcNAc...) asparagine). Glu-178 acts as the Proton donor in catalysis. The Nucleophile role is filled by Glu-247. N-linked (GlcNAc...) asparagine glycosylation is found at Asn-248, Asn-345, Asn-374, Asn-489, Asn-495, and Asn-555. Positions 694-779 (VYEKNVLELS…AKRLAVEAIC (86 aa)) constitute an SUEL-type lectin domain.

It belongs to the glycosyl hydrolase 35 family. As to expression, ubiquitous, with higher levels in roots and siliques.

The protein localises to the secreted. It localises to the extracellular space. It is found in the apoplast. The enzyme catalyses Hydrolysis of terminal non-reducing beta-D-galactose residues in beta-D-galactosides.. The protein is Beta-galactosidase 15 (BGAL15) of Arabidopsis thaliana (Mouse-ear cress).